The following is a 149-amino-acid chain: SsrA-binding protein (149 aa).

Residues Lys123–Glu149 are disordered.

This sequence belongs to the SmpB family.

Its subcellular location is the cytoplasm. Functionally, required for rescue of stalled ribosomes mediated by trans-translation. Binds to transfer-messenger RNA (tmRNA), required for stable association of tmRNA with ribosomes. tmRNA and SmpB together mimic tRNA shape, replacing the anticodon stem-loop with SmpB. tmRNA is encoded by the ssrA gene; the 2 termini fold to resemble tRNA(Ala) and it encodes a 'tag peptide', a short internal open reading frame. During trans-translation Ala-aminoacylated tmRNA acts like a tRNA, entering the A-site of stalled ribosomes, displacing the stalled mRNA. The ribosome then switches to translate the ORF on the tmRNA; the nascent peptide is terminated with the 'tag peptide' encoded by the tmRNA and targeted for degradation. The ribosome is freed to recommence translation, which seems to be the essential function of trans-translation. In Cupriavidus taiwanensis (strain DSM 17343 / BCRC 17206 / CCUG 44338 / CIP 107171 / LMG 19424 / R1) (Ralstonia taiwanensis (strain LMG 19424)), this protein is SsrA-binding protein.